A 131-amino-acid polypeptide reads, in one-letter code: Gem-associated protein 7 (131 aa).

At Met-1 the chain carries N-acetylmethionine. The SUZ-C domain maps to 1–29; that stretch reads MQTPVNIPVPVLRLPRGPDGFSRGFAPDG. Position 3 is a phosphothreonine (Thr-3). Positions 65–131 constitute a Sm domain; it reads RYLRSLLAMV…SDIISYTFKP (67 aa).

The protein belongs to the gemin-7 family. Part of the core SMN complex that contains SMN1, GEMIN2/SIP1, DDX20/GEMIN3, GEMIN4, GEMIN5, GEMIN6, GEMIN7, GEMIN8 and STRAP/UNRIP. Part of the SMN-Sm complex that contains SMN1, GEMIN2/SIP1, DDX20/GEMIN3, GEMIN4, GEMIN5, GEMIN6, GEMIN7, GEMIN8, STRAP/UNRIP and the Sm proteins SNRPB, SNRPD1, SNRPD2, SNRPD3, SNRPE, SNRPF and SNRPG. Interacts with GEMIN6; the interaction is direct. Interacts with STRAP/UNRIP; the interaction is direct. Interacts with GEMIN8; the interaction is direct. Interacts with SNRPB, SNRPD2, SNRPD3 and SNRPE; the interaction is direct.

It is found in the nucleus. The protein resides in the nucleoplasm. Its subcellular location is the gem. It localises to the cytoplasm. Functionally, the SMN complex catalyzes the assembly of small nuclear ribonucleoproteins (snRNPs), the building blocks of the spliceosome, and thereby plays an important role in the splicing of cellular pre-mRNAs. Most spliceosomal snRNPs contain a common set of Sm proteins SNRPB, SNRPD1, SNRPD2, SNRPD3, SNRPE, SNRPF and SNRPG that assemble in a heptameric protein ring on the Sm site of the small nuclear RNA to form the core snRNP (Sm core). In the cytosol, the Sm proteins SNRPD1, SNRPD2, SNRPE, SNRPF and SNRPG are trapped in an inactive 6S pICln-Sm complex by the chaperone CLNS1A that controls the assembly of the core snRNP. To assemble core snRNPs, the SMN complex accepts the trapped 5Sm proteins from CLNS1A forming an intermediate. Binding of snRNA inside 5Sm triggers eviction of the SMN complex, thereby allowing binding of SNRPD3 and SNRPB to complete assembly of the core snRNP. This chain is Gem-associated protein 7 (GEMIN7), found in Homo sapiens (Human).